The following is a 161-amino-acid chain: Interleukin-17F (161 aa).

An N-terminal signal peptide occupies residues 1–28; the sequence is MKGSCETTMVKSLLLLMLGFAIISSGAA. A glycan (N-linked (GlcNAc...) asparagine) is linked at Asn-83. 2 cysteine pairs are disulfide-bonded: Cys-100–Cys-150 and Cys-105–Cys-152.

Belongs to the IL-17 family. As to quaternary structure, homodimer; disulfide-linked. Heterodimer with IL17A (IL17A-IL17F). Forms complexes with IL17RA and IL17RC receptors with 2:1 binding stoichiometry: two receptor chains for one interleukin molecule. IL17F homodimer forms predominantly complexes with IL17RC homodimer, whereas IL17A-IL17F favors complexes with IL17RA-IL17RC. IL17RA and IL17RC chains cannot distinguish between IL17A and IL17F molecules, potentially enabling the formation of topologically distinct complexes.

Its subcellular location is the secreted. Effector cytokine of innate and adaptive immune system involved in antimicrobial host defense and maintenance of tissue integrity. IL17A-IL17F signals via IL17RA-IL17RC heterodimeric receptor complex, triggering homotypic interaction of IL17RA and IL17RC chains with TRAF3IP2 adapter through SEFIR domains. This leads to downstream TRAF6-mediated activation of NF-kappa-B and MAPkinase pathways ultimately resulting in transcriptional activation of cytokines, chemokines, antimicrobial peptides and matrix metalloproteinases, with potential strong immune inflammation. IL17A-IL17F is primarily involved in host defense against extracellular bacteria and fungi by inducing neutrophilic inflammation. As signature effector cytokine of T-helper 17 cells (Th17), primarily induces neutrophil activation and recruitment at infection and inflammatory sites. Stimulates the production of antimicrobial beta-defensins DEFB1, DEFB103A, and DEFB104A by mucosal epithelial cells, limiting the entry of microbes through the epithelial barriers. IL17F homodimer can signal via IL17RC homodimeric receptor complex, triggering downstream activation of TRAF6 and NF-kappa-B signaling pathway. Via IL17RC induces transcriptional activation of IL33, a potent cytokine that stimulates group 2 innate lymphoid cells and adaptive T-helper 2 cells involved in pulmonary allergic response to fungi. Likely via IL17RC, promotes sympathetic innervation of peripheral organs by coordinating the communication between gamma-delta T cells and parenchymal cells. Stimulates sympathetic innervation of thermogenic adipose tissue by driving TGFB1 expression. Regulates the composition of intestinal microbiota and immune tolerance by inducing antimicrobial proteins that specifically control the growth of commensal Firmicutes and Bacteroidetes. The polypeptide is Interleukin-17F (Il17f) (Rattus norvegicus (Rat)).